A 367-amino-acid polypeptide reads, in one-letter code: Chorismate synthase (367 aa).

Arg48 and Arg54 together coordinate NADP(+). FMN contacts are provided by residues 125–127 (RSS), 238–239 (NA), Gly278, 293–297 (KPTSS), and Arg319.

Belongs to the chorismate synthase family. As to quaternary structure, homotetramer. The cofactor is FMNH2.

The catalysed reaction is 5-O-(1-carboxyvinyl)-3-phosphoshikimate = chorismate + phosphate. Its pathway is metabolic intermediate biosynthesis; chorismate biosynthesis; chorismate from D-erythrose 4-phosphate and phosphoenolpyruvate: step 7/7. In terms of biological role, catalyzes the anti-1,4-elimination of the C-3 phosphate and the C-6 proR hydrogen from 5-enolpyruvylshikimate-3-phosphate (EPSP) to yield chorismate, which is the branch point compound that serves as the starting substrate for the three terminal pathways of aromatic amino acid biosynthesis. This reaction introduces a second double bond into the aromatic ring system. The sequence is that of Chorismate synthase from Stenotrophomonas maltophilia (strain R551-3).